Here is a 490-residue protein sequence, read N- to C-terminus: GTPase Der (490 aa).

2 EngA-type G domains span residues 3 to 166 (PVVA…MDDV) and 203 to 376 (IKLA…DSST). Residues 9 to 16 (GRPNVGKS), 56 to 60 (DTGGI), 118 to 121 (NKTD), 209 to 216 (GRPNVGKS), 256 to 260 (DTAGV), and 321 to 324 (NKWD) contribute to the GTP site. The KH-like domain maps to 377–461 (RRVSTAMLTR…PIRIQFKEGE (85 aa)).

This sequence belongs to the TRAFAC class TrmE-Era-EngA-EngB-Septin-like GTPase superfamily. EngA (Der) GTPase family. Associates with the 50S ribosomal subunit.

In terms of biological role, GTPase that plays an essential role in the late steps of ribosome biogenesis. This chain is GTPase Der, found in Salmonella choleraesuis (strain SC-B67).